A 312-amino-acid polypeptide reads, in one-letter code: Methionyl-tRNA formyltransferase (312 aa).

109–112 (SLLP) is a (6S)-5,6,7,8-tetrahydrofolate binding site.

Belongs to the Fmt family.

It carries out the reaction L-methionyl-tRNA(fMet) + (6R)-10-formyltetrahydrofolate = N-formyl-L-methionyl-tRNA(fMet) + (6S)-5,6,7,8-tetrahydrofolate + H(+). Attaches a formyl group to the free amino group of methionyl-tRNA(fMet). The formyl group appears to play a dual role in the initiator identity of N-formylmethionyl-tRNA by promoting its recognition by IF2 and preventing the misappropriation of this tRNA by the elongation apparatus. The sequence is that of Methionyl-tRNA formyltransferase from Anaeromyxobacter sp. (strain K).